The chain runs to 550 residues: Major fimbrium tip subunit FimE (550 aa).

The first 21 residues, 1-21, serve as a signal peptide directing secretion; that stretch reads MKSKSIIAQLLYVLIAFMAVS. C22 is lipidated: N-palmitoyl cysteine. C22 carries S-diacylglycerol cysteine lipidation. A propeptide spanning residues 22–51 is cleaved from the precursor; it reads CVADKSEPCPSGEPTRVSGSIVSLEHHGLR.

Belongs to the FimE family. In terms of assembly, fimbriae are composed of a major, structural subunit and the minor components FimC, FimD and FimE. Identified in a complex composed of FimC, FimD and FimE (in vitro). Does not directly interact with host proteins, but only as a complex with FimC and FimD.

Its subcellular location is the fimbrium. It localises to the cell outer membrane. Probably a component of the fimbrium tip; required for incorporation of FimC and FimD into fimbriae. These long, filamentous pili are attached to the cell surface; they mediate biofilm formation, adhesion onto host cells and onto other bacteria that are part of the oral microbiome. They play an important role in invasion of periodontal tissues and are major virulence factors. FimC, FimD and FimE contribute to interaction with host CXCR4 and thereby down-regulate the TLR2-mediated host immune response. This Porphyromonas gingivalis (strain ATCC 33277 / DSM 20709 / CIP 103683 / JCM 12257 / NCTC 11834 / 2561) protein is Major fimbrium tip subunit FimE.